We begin with the raw amino-acid sequence, 254 residues long: 3-deoxy-manno-octulosonate cytidylyltransferase (254 aa).

It belongs to the KdsB family.

The protein localises to the cytoplasm. It carries out the reaction 3-deoxy-alpha-D-manno-oct-2-ulosonate + CTP = CMP-3-deoxy-beta-D-manno-octulosonate + diphosphate. Its pathway is nucleotide-sugar biosynthesis; CMP-3-deoxy-D-manno-octulosonate biosynthesis; CMP-3-deoxy-D-manno-octulosonate from 3-deoxy-D-manno-octulosonate and CTP: step 1/1. The protein operates within bacterial outer membrane biogenesis; lipopolysaccharide biosynthesis. In terms of biological role, activates KDO (a required 8-carbon sugar) for incorporation into bacterial lipopolysaccharide in Gram-negative bacteria. This chain is 3-deoxy-manno-octulosonate cytidylyltransferase, found in Pseudomonas syringae pv. syringae (strain B728a).